The chain runs to 340 residues: Ketol-acid reductoisomerase (NADP(+)) (340 aa).

The 182-residue stretch at 1–182 (MRVYYDRDCD…GGGRSGIIET (182 aa)) folds into the KARI N-terminal Rossmann domain. Residues 24 to 27 (YGSQ), arginine 48, serine 51, serine 53, and 83 to 86 (DELQ) each bind NADP(+). The active site involves histidine 108. NADP(+) is bound at residue glycine 134. In terms of domain architecture, KARI C-terminal knotted spans 183–329 (NFREECETDL…KELRGMMPWI (147 aa)). Residues aspartate 191, glutamate 195, glutamate 227, and glutamate 231 each coordinate Mg(2+). Substrate is bound at residue serine 252.

Belongs to the ketol-acid reductoisomerase family. Mg(2+) serves as cofactor.

The enzyme catalyses (2R)-2,3-dihydroxy-3-methylbutanoate + NADP(+) = (2S)-2-acetolactate + NADPH + H(+). The catalysed reaction is (2R,3R)-2,3-dihydroxy-3-methylpentanoate + NADP(+) = (S)-2-ethyl-2-hydroxy-3-oxobutanoate + NADPH + H(+). It participates in amino-acid biosynthesis; L-isoleucine biosynthesis; L-isoleucine from 2-oxobutanoate: step 2/4. Its pathway is amino-acid biosynthesis; L-valine biosynthesis; L-valine from pyruvate: step 2/4. In terms of biological role, involved in the biosynthesis of branched-chain amino acids (BCAA). Catalyzes an alkyl-migration followed by a ketol-acid reduction of (S)-2-acetolactate (S2AL) to yield (R)-2,3-dihydroxy-isovalerate. In the isomerase reaction, S2AL is rearranged via a Mg-dependent methyl migration to produce 3-hydroxy-3-methyl-2-ketobutyrate (HMKB). In the reductase reaction, this 2-ketoacid undergoes a metal-dependent reduction by NADPH to yield (R)-2,3-dihydroxy-isovalerate. In Dinoroseobacter shibae (strain DSM 16493 / NCIMB 14021 / DFL 12), this protein is Ketol-acid reductoisomerase (NADP(+)).